Here is a 263-residue protein sequence, read N- to C-terminus: Hemophilin (263 aa).

A signal peptide spans 1–20 (MKISQLFLGLVACSTAFAYA). Positions 42, 58, 104, and 105 each coordinate heme b.

Monomer in solution. Interacts with host hemoglobin.

It localises to the secreted. Its function is as follows. Part of a high affinity heme acquisition system. Functions as a hemophore that acquires heme from human hemoglobin and delivers the heme to its cognate receptor, HphR, facilitating transport of heme across the bacterial outer membrane. Apo HphA interacts specifically with human hemoglobin and steals heme through a passive process probably due to its high affinity for heme. It can also acquire heme complexed to human serum albumin. Plays a supporting role for full virulence, acting as an accessory factor that enhances the process of heme uptake. The sequence is that of Hemophilin from Acinetobacter baumannii.